Consider the following 547-residue polypeptide: MLRRSLSVVFGRRTIACKSCGIELQNKIKDGPGYFVTPQKAIRPAAKQLELAKQLLYGERLRIEKQLTGPDRNTLEKWKELVPPSCKRCMDALHHNRYDTAEFPEHTLEDVGKGVPRDAVVYHIAPLWQFPMGLDRRVLQSSKKVCVLFSKIDMVVQRPSHMPQDVGAFFQSLLYHDLHVKITNFRFFSALKQWNIQTVRNALSKESYLLGGPNAGKSSLINALMRTVVYESRRLVSSKQSSATPADLPPKAHLDIHSAGVSTIPNFTRQPQQYDIKGKIIHDVPGYRTSKSHTFDFNSMIQKDYLLRLRKSDSKTYLTKKYTSINGTESGRCYTVGGLFYYVPPAQTINQVTRYMPGDPQKFQSIDKGLEVVRDVYSDRWDKETGSHPLAEYIHVNPALGDKNSFVRHVIPPFQGTIEIVMRDVGYLRVVATGSFKFLGLHEIWVPKGIEVSVREPLTDVFRTTIEAYRDSGSVANVAQMIIKRPYISSTYPMAHNETDPLAKMREMYLERTASNLSARRLMNRDPLELISQKQKERVNLYWHYCW.

Residues 1–22 constitute a mitochondrion transit peptide; it reads MLRRSLSVVFGRRTIACKSCGI. Residues 105-290 form the CP-type G domain; that stretch reads EHTLEDVGKG…IHDVPGYRTS (186 aa).

This sequence belongs to the TRAFAC class YlqF/YawG GTPase family. GEP3 subfamily.

Its subcellular location is the mitochondrion. Functionally, may be involved in the mitochondrial lipid metabolism. The protein is Genetic interactor of prohibitins 3, mitochondrial (GEP3) of Eremothecium gossypii (strain ATCC 10895 / CBS 109.51 / FGSC 9923 / NRRL Y-1056) (Yeast).